A 153-amino-acid polypeptide reads, in one-letter code: Putative pre-16S rRNA nuclease (153 aa).

The protein belongs to the YqgF nuclease family.

The protein localises to the cytoplasm. Its function is as follows. Could be a nuclease involved in processing of the 5'-end of pre-16S rRNA. The protein is Putative pre-16S rRNA nuclease of Prochlorococcus marinus (strain SARG / CCMP1375 / SS120).